The following is a 142-amino-acid chain: MLMPRRVKYRKQQRGRMKGKAKGGTLVQFGEWGLKALEPAWITAQQIEACRIAMMRVMKRAGKIWIRIFPDKPYTKKPAESRMGKGKGNVEGWVAVVKPGKILFEIAGVDEETAHEALRYAASKLPIATKVVPRHHIGGEAV.

This sequence belongs to the universal ribosomal protein uL16 family. As to quaternary structure, part of the 50S ribosomal subunit.

Binds 23S rRNA and is also seen to make contacts with the A and possibly P site tRNAs. In Thermotoga neapolitana (strain ATCC 49049 / DSM 4359 / NBRC 107923 / NS-E), this protein is Large ribosomal subunit protein uL16.